Reading from the N-terminus, the 138-residue chain is Large ribosomal subunit protein bL17 (138 aa).

The protein belongs to the bacterial ribosomal protein bL17 family. As to quaternary structure, part of the 50S ribosomal subunit. Contacts protein L32.

This chain is Large ribosomal subunit protein bL17, found in Bradyrhizobium diazoefficiens (strain JCM 10833 / BCRC 13528 / IAM 13628 / NBRC 14792 / USDA 110).